The chain runs to 389 residues: Diaminopimelate decarboxylase (389 aa).

Lys-58 carries the post-translational modification N6-(pyridoxal phosphate)lysine. Residues Gly-233 and Glu-271–Arg-274 contribute to the pyridoxal 5'-phosphate site. Substrate contacts are provided by Arg-274, Arg-310, Tyr-314, Glu-342, and Tyr-370. A pyridoxal 5'-phosphate-binding site is contributed by Tyr-370.

The protein belongs to the Orn/Lys/Arg decarboxylase class-II family. LysA subfamily. In terms of assembly, homodimer. Pyridoxal 5'-phosphate is required as a cofactor.

The catalysed reaction is meso-2,6-diaminopimelate + H(+) = L-lysine + CO2. It participates in amino-acid biosynthesis; L-lysine biosynthesis via DAP pathway; L-lysine from DL-2,6-diaminopimelate: step 1/1. In terms of biological role, specifically catalyzes the decarboxylation of meso-diaminopimelate (meso-DAP) to L-lysine. This is Diaminopimelate decarboxylase from Francisella tularensis subsp. holarctica (strain LVS).